Here is a 509-residue protein sequence, read N- to C-terminus: Maturase K (509 aa).

The protein belongs to the intron maturase 2 family. MatK subfamily.

It is found in the plastid. Its subcellular location is the chloroplast. In terms of biological role, usually encoded in the trnK tRNA gene intron. Probably assists in splicing its own and other chloroplast group II introns. In Nicotiana sylvestris (Wood tobacco), this protein is Maturase K.